The following is a 290-amino-acid chain: Isopentenyl-diphosphate Delta-isomerase II (290 aa).

Positions 108 to 260 (MLHRAFTVFL…GLKLSPWFRL (153 aa)) constitute a Nudix hydrolase domain. Catalysis depends on residues C145 and E207.

It belongs to the IPP isomerase type 1 family.

The catalysed reaction is isopentenyl diphosphate = dimethylallyl diphosphate. It participates in isoprenoid biosynthesis; dimethylallyl diphosphate biosynthesis; dimethylallyl diphosphate from isopentenyl diphosphate: step 1/1. The protein operates within porphyrin-containing compound metabolism; chlorophyll biosynthesis. Functionally, catalyzes the 1,3-allylic rearrangement of the homoallylic substrate isopentenyl (IPP) to its highly electrophilic allylic isomer, dimethylallyl diphosphate (DMAPP). The sequence is that of Isopentenyl-diphosphate Delta-isomerase II (IPI2) from Clarkia xantiana (Gunsight clarkia).